Consider the following 375-residue polypeptide: Queuine tRNA-ribosyltransferase (375 aa).

The active-site Proton acceptor is the D89. Substrate-binding positions include 89-93 (DSGGF), D143, Q187, and G214. The segment at 245-251 (GVGKPED) is RNA binding. The Nucleophile role is filled by D264. Residues 269 to 273 (TRNAR) form an RNA binding; important for wobble base 34 recognition region. 4 residues coordinate Zn(2+): C302, C304, C307, and H333.

Belongs to the queuine tRNA-ribosyltransferase family. Homodimer. Within each dimer, one monomer is responsible for RNA recognition and catalysis, while the other monomer binds to the replacement base PreQ1. Requires Zn(2+) as cofactor.

It catalyses the reaction 7-aminomethyl-7-carbaguanine + guanosine(34) in tRNA = 7-aminomethyl-7-carbaguanosine(34) in tRNA + guanine. It participates in tRNA modification; tRNA-queuosine biosynthesis. Functionally, catalyzes the base-exchange of a guanine (G) residue with the queuine precursor 7-aminomethyl-7-deazaguanine (PreQ1) at position 34 (anticodon wobble position) in tRNAs with GU(N) anticodons (tRNA-Asp, -Asn, -His and -Tyr). Catalysis occurs through a double-displacement mechanism. The nucleophile active site attacks the C1' of nucleotide 34 to detach the guanine base from the RNA, forming a covalent enzyme-RNA intermediate. The proton acceptor active site deprotonates the incoming PreQ1, allowing a nucleophilic attack on the C1' of the ribose to form the product. After dissociation, two additional enzymatic reactions on the tRNA convert PreQ1 to queuine (Q), resulting in the hypermodified nucleoside queuosine (7-(((4,5-cis-dihydroxy-2-cyclopenten-1-yl)amino)methyl)-7-deazaguanosine). The sequence is that of Queuine tRNA-ribosyltransferase from Enterobacter sp. (strain 638).